Reading from the N-terminus, the 132-residue chain is Large-conductance mechanosensitive channel (132 aa).

The next 2 helical transmembrane spans lie at 11 to 31 (FISRGNALDLAVGVVIGGAFG) and 75 to 95 (GSFLQAVFDFVIIAFAIFLLV).

Belongs to the MscL family. In terms of assembly, homopentamer.

The protein resides in the cell inner membrane. In terms of biological role, channel that opens in response to stretch forces in the membrane lipid bilayer. May participate in the regulation of osmotic pressure changes within the cell. The protein is Large-conductance mechanosensitive channel of Synechococcus sp. (strain JA-2-3B'a(2-13)) (Cyanobacteria bacterium Yellowstone B-Prime).